The following is a 56-amino-acid chain: MAVQQNKKTRSCRGMRRSHDALTTATVSVDKVSGETHLRHHVTADGFYRGRKVIAK.

The protein belongs to the bacterial ribosomal protein bL32 family.

The sequence is that of Large ribosomal subunit protein bL32 from Edwardsiella ictaluri (strain 93-146).